The chain runs to 224 residues: 7-cyano-7-deazaguanine synthase (224 aa).

8–18 serves as a coordination point for ATP; that stretch reads LSGGMDSAAVI. Positions 186, 196, 199, and 202 each coordinate Zn(2+).

It belongs to the QueC family. It depends on Zn(2+) as a cofactor.

It carries out the reaction 7-carboxy-7-deazaguanine + NH4(+) + ATP = 7-cyano-7-deazaguanine + ADP + phosphate + H2O + H(+). It functions in the pathway purine metabolism; 7-cyano-7-deazaguanine biosynthesis. In terms of biological role, catalyzes the ATP-dependent conversion of 7-carboxy-7-deazaguanine (CDG) to 7-cyano-7-deazaguanine (preQ(0)). In Xanthomonas oryzae pv. oryzae (strain MAFF 311018), this protein is 7-cyano-7-deazaguanine synthase.